The sequence spans 316 residues: MARFSPQDLADHLKDGLLSFPATAFQDDLEVDEAAYVEHIEWQSSYPVAGLFAAGGTGEGFSLTVEENHRVTQLAVQASSPEVPVLGSATGSTKSAIANAQGAEAAGAEGVLLLPPYLTECDAEGLYNHAAAVCESTSLGVIVYNRANAIYSPEVIARLSERYPNFIGFKDGTGNIEHLAKITTLCGDRLFYLGGLPTAETFALPLLQMGMSTYSSAMFNFIPDFALSFYADVRAQDSAAVKQKLSDFVLPYLDIRDRAQGYGVSIVKGGLKAVGRNAGGVRPPLRNLSEQDIADLSDLLATSGAGSYRLPVEVKA.

It belongs to the DapA family.

It catalyses the reaction 5-dehydro-4-deoxy-D-glucarate + H(+) = 2,5-dioxopentanoate + CO2 + H2O. Its pathway is carbohydrate acid metabolism; D-glucarate degradation; 2,5-dioxopentanoate from D-glucarate: step 2/2. The polypeptide is Probable 5-dehydro-4-deoxyglucarate dehydratase (Corynebacterium glutamicum (strain ATCC 13032 / DSM 20300 / JCM 1318 / BCRC 11384 / CCUG 27702 / LMG 3730 / NBRC 12168 / NCIMB 10025 / NRRL B-2784 / 534)).